Consider the following 277-residue polypeptide: MALKKFNPVTPSTRQLVIVDRSGLYKGKPVKGLTEGLTKSGGRNNYGRITARFIGGGHKRSYRIIDFKRRKFDVVGTVERIEYDPNRTAFIALIKYDDGELSYIIAPQRLAAGDKIVAGEAVDVKPGNAMPLASMPVGTIVHNIELKPGKGGQVARSAGGYAQLVGRDQGMAILRLNSGEQRVVHGSCMATVGAVSNPDHGNINDGKAGRTVWRGKRPHNRGVTMNPVDHPHGGGEGRTSGGRHPVSPWGKPTKGKKTRSNKATDKFILRSRHQRKS.

The tract at residues 199–277 is disordered; it reads DHGNINDGKA…ILRSRHQRKS (79 aa).

It belongs to the universal ribosomal protein uL2 family. As to quaternary structure, part of the 50S ribosomal subunit. Forms a bridge to the 30S subunit in the 70S ribosome.

One of the primary rRNA binding proteins. Required for association of the 30S and 50S subunits to form the 70S ribosome, for tRNA binding and peptide bond formation. It has been suggested to have peptidyltransferase activity; this is somewhat controversial. Makes several contacts with the 16S rRNA in the 70S ribosome. The sequence is that of Large ribosomal subunit protein uL2 from Mesorhizobium japonicum (strain LMG 29417 / CECT 9101 / MAFF 303099) (Mesorhizobium loti (strain MAFF 303099)).